The primary structure comprises 95 residues: Beta-defensin 132 (95 aa).

The N-terminal stretch at 1–22 is a signal peptide; that stretch reads MKFLLLVLAALGFLTQVIPASA. Disulfide bonds link Cys-27–Cys-55, Cys-35–Cys-49, and Cys-39–Cys-56. Residues 74–95 are disordered; sequence HWQSRRRNTQRKDKKQQTTVTS. Residues 76–87 show a composition bias toward basic residues; that stretch reads QSRRRNTQRKDK.

It belongs to the beta-defensin family.

It is found in the secreted. Has antibacterial activity. This is Beta-defensin 132 (DEFB132) from Homo sapiens (Human).